An 822-amino-acid polypeptide reads, in one-letter code: Probable phosphoketolase (822 aa).

The protein belongs to the XFP family. Thiamine diphosphate is required as a cofactor.

This Nocardia farcinica (strain IFM 10152) protein is Probable phosphoketolase.